Reading from the N-terminus, the 254-residue chain is Ribosomal RNA small subunit methyltransferase G (254 aa).

S-adenosyl-L-methionine is bound by residues Gly84, Phe89, 136-137, and Arg155; that span reads VE.

Belongs to the methyltransferase superfamily. RNA methyltransferase RsmG family.

It is found in the cytoplasm. Specifically methylates the N7 position of a guanine in 16S rRNA. The polypeptide is Ribosomal RNA small subunit methyltransferase G (Synechococcus sp. (strain CC9311)).